The sequence spans 173 residues: Lens fiber membrane intrinsic protein (173 aa).

The Cytoplasmic segment spans residues 1 to 3 (MYS). The helical transmembrane segment at 4 to 24 (FMGGGLFCAWVGTILLVVAMA) threads the bilayer. Residues 25-66 (TDHWMQYRLSGSFAHQGLWRYCLGNKCYLQTDSIAYWNATRA) lie on the Extracellular side of the membrane. Residues tryptophan 43 and tryptophan 61 are each glycosylated (C-linked (Man) tryptophan). The N-linked (GlcNAc...) asparagine glycan is linked to asparagine 62. The helical transmembrane segment at 67–87 (FMILSALCAISGIIMGIMAFA) threads the bilayer. Over 88-98 (HQPTFSRISRP) the chain is Cytoplasmic. Residues 99–119 (FSAGIMFFSSTLFVVLALAIY) traverse the membrane as a helical segment. Topologically, residues 120–140 (TGVTVSFLGRRFGDWRFSWSY) are extracellular. A helical membrane pass occupies residues 141–161 (ILGWVAVLMTFFAGIFYMCAY). At 162 to 173 (RVHECRRLSTPR) the chain is on the cytoplasmic side. Serine 170 carries the post-translational modification Phosphoserine. Threonine 171 carries the phosphothreonine modification.

This sequence belongs to the PMP-22/EMP/MP20 family. Seems to be associated with itself or another lens membrane component via disulfide bonds. Eye lens specific.

The protein localises to the membrane. Its function is as follows. Present in the thicker 16-17 nm junctions of mammalian lens fiber cells, where it may contribute to cell junctional organization. Acts as a receptor for calmodulin. May play an important role in both lens development and cataractogenesis. The chain is Lens fiber membrane intrinsic protein (LIM2) from Homo sapiens (Human).